Consider the following 356-residue polypeptide: Glycerol-1-phosphate dehydrogenase [NAD(P)+] (356 aa).

NAD(+)-binding positions include 103 to 107 (GRSID) and 125 to 128 (TAAS). Residue Asp130 coordinates substrate. Residue Ser134 coordinates NAD(+). Asp177 is a substrate binding site. 2 residues coordinate Zn(2+): Asp177 and His257. His261 serves as a coordination point for substrate. His273 is a Zn(2+) binding site.

This sequence belongs to the glycerol-1-phosphate dehydrogenase family. Zn(2+) is required as a cofactor.

The protein localises to the cytoplasm. It catalyses the reaction sn-glycerol 1-phosphate + NAD(+) = dihydroxyacetone phosphate + NADH + H(+). It carries out the reaction sn-glycerol 1-phosphate + NADP(+) = dihydroxyacetone phosphate + NADPH + H(+). Its pathway is membrane lipid metabolism; glycerophospholipid metabolism. Its function is as follows. Catalyzes the NAD(P)H-dependent reduction of dihydroxyacetonephosphate (DHAP or glycerone phosphate) to glycerol 1-phosphate (G1P). The G1P thus generated is used as the glycerophosphate backbone of phospholipids in the cellular membranes of Archaea. This is Glycerol-1-phosphate dehydrogenase [NAD(P)+] from Methanosarcina mazei (strain ATCC BAA-159 / DSM 3647 / Goe1 / Go1 / JCM 11833 / OCM 88) (Methanosarcina frisia).